A 351-amino-acid polypeptide reads, in one-letter code: Type II methyltransferase M.DsaV (351 aa).

Positions 6 to 312 (LKFIDLFAGI…QKMLSYIDLT (307 aa)) constitute an SAM-dependent MTase C5-type domain. Residue Cys-75 is part of the active site.

It belongs to the class I-like SAM-binding methyltransferase superfamily. C5-methyltransferase family.

The catalysed reaction is a 2'-deoxycytidine in DNA + S-adenosyl-L-methionine = a 5-methyl-2'-deoxycytidine in DNA + S-adenosyl-L-homocysteine + H(+). Its function is as follows. A methylase, recognizes the double-stranded sequence 5'-CCNGG-3', methylates C-2 on both strands, and protects the DNA from cleavage by the DsaV endonuclease. The protein is Type II methyltransferase M.DsaV of Dactylococcopsis salina (Myxobaktron salinum).